A 256-amino-acid chain; its full sequence is 5'-nucleotidase SurE (256 aa).

Asp8, Asp9, Ser42, and Asn94 together coordinate a divalent metal cation.

This sequence belongs to the SurE nucleotidase family. A divalent metal cation serves as cofactor.

The protein localises to the cytoplasm. The enzyme catalyses a ribonucleoside 5'-phosphate + H2O = a ribonucleoside + phosphate. Its function is as follows. Nucleotidase that shows phosphatase activity on nucleoside 5'-monophosphates. This Ehrlichia chaffeensis (strain ATCC CRL-10679 / Arkansas) protein is 5'-nucleotidase SurE.